A 33-amino-acid polypeptide reads, in one-letter code: Ferredoxin (33 aa).

Residues 3–33 (KYKVRLLSEAEGIDVTIDSADDVYILDAAEE) enclose the 2Fe-2S ferredoxin-type domain.

This sequence belongs to the 2Fe2S plant-type ferredoxin family. Requires [2Fe-2S] cluster as cofactor.

The protein localises to the plastid. It localises to the chloroplast. Functionally, ferredoxins are iron-sulfur proteins that transfer electrons in a wide variety of metabolic reactions. The chain is Ferredoxin from Porphyridium aerugineum (Red microalga).